A 221-amino-acid chain; its full sequence is Transcription factor otaR1 (221 aa).

A disordered region spans residues 109–146; the sequence is ASRSRPAFSTPASRPGLSSAKSPSLGATSPGSMDRSEE. Residues 127–139 are compositionally biased toward polar residues; sequence SAKSPSLGATSPG. Residues 152 to 192 are basic motif; sequence KKYHEKYKERNRLAAGRSRQKQADLINLLQAEQQEEERRRK. Positions 152–215 constitute a bZIP domain; it reads KKYHEKYKER…VDMKQELQHH (64 aa). Positions 198–212 are leucine-zipper; sequence IANMQKELVDMKQEL.

Its subcellular location is the nucleus. Its function is as follows. Transcription factor; part of the gene cluster that mediates the biosynthesis of ochratoxin A (OTA), a mycotoxin demonstrated to have nephrotoxic, immunotoxic, genotoxic, neurotoxic, and teratogenic properties. Positively regulates the expression of the OTA biosynthetic genes and subsequent production of OTA. Probably binds to conserved 5'-ACGT-3' bZIP binding motifs found in multiple copies (3 to 4) in the promoters of the OTA biosynthetic genes. Acts not only as a pathway-specific regulator of the OTA cluster but also binds at other chromosomal positions outside the OTA cluster and can act as a broad regulator. Negatively regulates pathogenicity and plays a critical role in tolerance to reactive oxygen species (ROS). This is Transcription factor otaR1 from Aspergillus niger (strain ATCC MYA-4892 / CBS 513.88 / FGSC A1513).